A 303-amino-acid chain; its full sequence is Oxygen-dependent coproporphyrinogen-III oxidase (303 aa).

Serine 93 serves as a coordination point for substrate. Residues histidine 97 and histidine 107 each contribute to the a divalent metal cation site. The active-site Proton donor is the histidine 107. 109-111 (NVR) contributes to the substrate binding site. 2 residues coordinate a divalent metal cation: histidine 146 and histidine 176. The important for dimerization stretch occupies residues 241–276 (YVEFNLVYDRGTLFGLQSGGRTESILMSLPPQVRWG). Position 259 to 261 (259 to 261 (GGR)) interacts with substrate.

Belongs to the aerobic coproporphyrinogen-III oxidase family. In terms of assembly, homodimer. The cofactor is a divalent metal cation.

It is found in the cytoplasm. The catalysed reaction is coproporphyrinogen III + O2 + 2 H(+) = protoporphyrinogen IX + 2 CO2 + 2 H2O. Its pathway is porphyrin-containing compound metabolism; protoporphyrin-IX biosynthesis; protoporphyrinogen-IX from coproporphyrinogen-III (O2 route): step 1/1. Its function is as follows. Involved in the heme biosynthesis. Catalyzes the aerobic oxidative decarboxylation of propionate groups of rings A and B of coproporphyrinogen-III to yield the vinyl groups in protoporphyrinogen-IX. In Pseudomonas putida (strain W619), this protein is Oxygen-dependent coproporphyrinogen-III oxidase.